Here is a 95-residue protein sequence, read N- to C-terminus: MAIDAATVRKVARLARIATPEERLEPLAQELNGIMTWIEQLAEVDTDGCEPLTSVVAAGLPLREDVVTMGGDPARVTSNAPKSINNFFVVPKVVE.

It belongs to the GatC family. In terms of assembly, heterotrimer of A, B and C subunits.

The enzyme catalyses L-glutamyl-tRNA(Gln) + L-glutamine + ATP + H2O = L-glutaminyl-tRNA(Gln) + L-glutamate + ADP + phosphate + H(+). It carries out the reaction L-aspartyl-tRNA(Asn) + L-glutamine + ATP + H2O = L-asparaginyl-tRNA(Asn) + L-glutamate + ADP + phosphate + 2 H(+). In terms of biological role, allows the formation of correctly charged Asn-tRNA(Asn) or Gln-tRNA(Gln) through the transamidation of misacylated Asp-tRNA(Asn) or Glu-tRNA(Gln) in organisms which lack either or both of asparaginyl-tRNA or glutaminyl-tRNA synthetases. The reaction takes place in the presence of glutamine and ATP through an activated phospho-Asp-tRNA(Asn) or phospho-Glu-tRNA(Gln). The sequence is that of Glutamyl-tRNA(Gln) amidotransferase subunit C from Caulobacter vibrioides (strain ATCC 19089 / CIP 103742 / CB 15) (Caulobacter crescentus).